Reading from the N-terminus, the 700-residue chain is Phosphoribosylformylglycinamidine synthase subunit PurL (700 aa).

The active site involves His-34. Tyr-37 contacts ATP. Residue Glu-79 participates in Mg(2+) binding. Residues 80 to 83 (SHNH) and Arg-102 each bind substrate. Catalysis depends on His-81, which acts as the Proton acceptor. Asp-103 provides a ligand contact to Mg(2+). Gln-227 lines the substrate pocket. Asp-255 contributes to the Mg(2+) binding site. 299-301 (ESQ) lines the substrate pocket. ATP contacts are provided by Asp-476 and Gly-513. Asn-514 serves as a coordination point for Mg(2+). Substrate is bound at residue Ser-516.

The protein belongs to the FGAMS family. Monomer. Part of the FGAM synthase complex composed of 1 PurL, 1 PurQ and 2 PurS subunits.

It localises to the cytoplasm. The catalysed reaction is N(2)-formyl-N(1)-(5-phospho-beta-D-ribosyl)glycinamide + L-glutamine + ATP + H2O = 2-formamido-N(1)-(5-O-phospho-beta-D-ribosyl)acetamidine + L-glutamate + ADP + phosphate + H(+). The protein operates within purine metabolism; IMP biosynthesis via de novo pathway; 5-amino-1-(5-phospho-D-ribosyl)imidazole from N(2)-formyl-N(1)-(5-phospho-D-ribosyl)glycinamide: step 1/2. Functionally, part of the phosphoribosylformylglycinamidine synthase complex involved in the purines biosynthetic pathway. Catalyzes the ATP-dependent conversion of formylglycinamide ribonucleotide (FGAR) and glutamine to yield formylglycinamidine ribonucleotide (FGAM) and glutamate. The FGAM synthase complex is composed of three subunits. PurQ produces an ammonia molecule by converting glutamine to glutamate. PurL transfers the ammonia molecule to FGAR to form FGAM in an ATP-dependent manner. PurS interacts with PurQ and PurL and is thought to assist in the transfer of the ammonia molecule from PurQ to PurL. The polypeptide is Phosphoribosylformylglycinamidine synthase subunit PurL (Halobacterium salinarum (strain ATCC 29341 / DSM 671 / R1)).